A 53-amino-acid chain; its full sequence is ATP synthase protein 8 (53 aa).

Residues P6–M26 traverse the membrane as a helical segment.

Belongs to the ATPase protein 8 family. In terms of assembly, F-type ATPases have 2 components, CF(1) - the catalytic core - and CF(0) - the membrane proton channel.

The protein localises to the mitochondrion membrane. Mitochondrial membrane ATP synthase (F(1)F(0) ATP synthase or Complex V) produces ATP from ADP in the presence of a proton gradient across the membrane which is generated by electron transport complexes of the respiratory chain. F-type ATPases consist of two structural domains, F(1) - containing the extramembraneous catalytic core and F(0) - containing the membrane proton channel, linked together by a central stalk and a peripheral stalk. During catalysis, ATP synthesis in the catalytic domain of F(1) is coupled via a rotary mechanism of the central stalk subunits to proton translocation. Part of the complex F(0) domain. Minor subunit located with subunit a in the membrane. This Ceratitis capitata (Mediterranean fruit fly) protein is ATP synthase protein 8 (mt:ATPase8).